Reading from the N-terminus, the 1229-residue chain is Receptor-type adenylate cyclase GRESAG 4.3 (1229 aa).

Residues 1 to 24 lie on the Cytoplasmic side of the membrane; sequence MIARVCRLTKHSKPPHLPITLTTP. The helical transmembrane segment at 25-45 threads the bilayer; sequence TLFLVVLVLLQLHPICVLVNV. The Extracellular segment spans residues 46-845; sequence DDGGGVTVKA…PNGNALTPAQ (800 aa). Residues Asn-77, Asn-84, Asn-626, Asn-693, and Asn-768 are each glycosylated (N-linked (GlcNAc...) asparagine). A helical membrane pass occupies residues 846-866; sequence LAGVVGGSLFVVALAICLSVL. The Cytoplasmic portion of the chain corresponds to 867 to 1229; the sequence is ACFTLRGTRD…SNDLSDMIRV (363 aa). The Guanylate cyclase domain maps to 889–1043; it reads TLIFTDIESS…RTSNMAARTE (155 aa). Residues Asp-894 and Asp-937 each coordinate Mg(2+).

It belongs to the adenylyl cyclase class-3 family. It depends on Mg(2+) as a cofactor.

Its subcellular location is the membrane. It carries out the reaction ATP = 3',5'-cyclic AMP + diphosphate. In terms of biological role, could act as a receptor for an unknown ligand. The sequence is that of Receptor-type adenylate cyclase GRESAG 4.3 (GRESAG 4.3) from Trypanosoma brucei brucei.